The following is a 488-amino-acid chain: F-box protein At3g60790 (488 aa).

Positions 1–21 are disordered; that stretch reads MTTQSSSSSSSLPSSLSSTPP. Positions 49-95 constitute an F-box domain; it reads VDRISMLPDEMLQKILSTLSTKDAVITSTLSKRWVDQWKRIPHLCVD.

The polypeptide is F-box protein At3g60790 (Arabidopsis thaliana (Mouse-ear cress)).